A 622-amino-acid polypeptide reads, in one-letter code: Cilia- and flagella-associated protein 206 (622 aa).

Belongs to the CFAP206 family.

It localises to the cytoplasm. The protein resides in the cytoskeleton. Its subcellular location is the cilium axoneme. It is found in the cilium basal body. In terms of biological role, essential for sperm motility and is involved in the regulation of the beating frequency of motile cilia on the epithelial cells of the respiratory tract. Required for the establishment of radial spokes in sperm flagella. In Bos taurus (Bovine), this protein is Cilia- and flagella-associated protein 206.